The following is a 128-amino-acid chain: Ribosome-binding factor A (128 aa).

The protein belongs to the RbfA family. In terms of assembly, monomer. Binds 30S ribosomal subunits, but not 50S ribosomal subunits or 70S ribosomes.

It is found in the cytoplasm. One of several proteins that assist in the late maturation steps of the functional core of the 30S ribosomal subunit. Associates with free 30S ribosomal subunits (but not with 30S subunits that are part of 70S ribosomes or polysomes). Required for efficient processing of 16S rRNA. May interact with the 5'-terminal helix region of 16S rRNA. This is Ribosome-binding factor A from Geobacillus thermodenitrificans (strain NG80-2).